A 291-amino-acid polypeptide reads, in one-letter code: Ribosomal RNA small subunit methyltransferase H (291 aa).

S-adenosyl-L-methionine is bound by residues glycine 36–histidine 38, aspartate 55, alanine 90, aspartate 102, and glutamine 109.

This sequence belongs to the methyltransferase superfamily. RsmH family.

It is found in the cytoplasm. The enzyme catalyses cytidine(1402) in 16S rRNA + S-adenosyl-L-methionine = N(4)-methylcytidine(1402) in 16S rRNA + S-adenosyl-L-homocysteine + H(+). In terms of biological role, specifically methylates the N4 position of cytidine in position 1402 (C1402) of 16S rRNA. This chain is Ribosomal RNA small subunit methyltransferase H, found in Thermosipho africanus (strain TCF52B).